The primary structure comprises 139 residues: D-ribose pyranase (139 aa).

Residue H20 is the Proton donor of the active site. Substrate contacts are provided by residues D28, H106, and 128 to 130 (FAN).

It belongs to the RbsD / FucU family. RbsD subfamily. Homodecamer.

It is found in the cytoplasm. It catalyses the reaction beta-D-ribopyranose = beta-D-ribofuranose. Its pathway is carbohydrate metabolism; D-ribose degradation; D-ribose 5-phosphate from beta-D-ribopyranose: step 1/2. Its function is as follows. Catalyzes the interconversion of beta-pyran and beta-furan forms of D-ribose. The chain is D-ribose pyranase from Klebsiella pneumoniae (strain 342).